Here is a 189-residue protein sequence, read N- to C-terminus: Shikimate kinase (189 aa).

Residue 22–27 participates in ATP binding; it reads ASGKST. Ser26 is a Mg(2+) binding site. Substrate is bound by residues Asp44, Arg68, and Gly90. Arg128 contacts ATP. Arg147 provides a ligand contact to substrate.

Belongs to the shikimate kinase family. As to quaternary structure, monomer. Requires Mg(2+) as cofactor.

It is found in the cytoplasm. It catalyses the reaction shikimate + ATP = 3-phosphoshikimate + ADP + H(+). The protein operates within metabolic intermediate biosynthesis; chorismate biosynthesis; chorismate from D-erythrose 4-phosphate and phosphoenolpyruvate: step 5/7. Catalyzes the specific phosphorylation of the 3-hydroxyl group of shikimic acid using ATP as a cosubstrate. This chain is Shikimate kinase, found in Synechococcus sp. (strain JA-3-3Ab) (Cyanobacteria bacterium Yellowstone A-Prime).